The following is a 347-amino-acid chain: Probable zinc transporter 8 (347 aa).

The signal sequence occupies residues 1–27 (MATTTQHMNQIFLVLLLISFAISPAIS). Residues 28–51 (TVPKECETDSTDSCIDKTKALPLK) are Extracellular-facing. The chain crosses the membrane as a helical span at residues 52–72 (IVAIVAILVTSMIGVAAPLFS). The Cytoplasmic portion of the chain corresponds to 73–83 (RYVTFLHPDGK). A helical membrane pass occupies residues 84–104 (IFMIIKCFASGIILGTGFMHV). At 105–124 (LPDSFEMLSSPCLEDNPWHK) the chain is on the extracellular side. A helical transmembrane segment spans residues 125-145 (FPFTGFVAMLSGLVTLAIDSI). The Cytoplasmic portion of the chain corresponds to 146 to 192 (ATSLYTKKAVADDSEERTTPMIIQIDHLPLTTKERSSTCSKQLLRYR). The chain crosses the membrane as a helical span at residues 193 to 213 (VIATVLELGIIVHSVVIGLSL). Over 214–224 (GATNDTCTIKG) the chain is Extracellular. Residues 225–245 (LIAALCFHQMFEGMGLGGCIL) form a helical membrane-spanning segment. The Cytoplasmic segment spans residues 246–254 (QAEYTNVKK). The chain crosses the membrane as a helical span at residues 255–275 (FVMAFFFAVTTPSGIALGIAL). Residues 276–286 (SSVYKDNSPTA) are Extracellular-facing. Residues 287–307 (LITVGLLNACSAGLLIYMALV) form a helical membrane-spanning segment. Residues 308–326 (DLLAAEFMGSMLQRSVKLQ) lie on the Cytoplasmic side of the membrane. The helical transmembrane segment at 327 to 347 (LNCFGAALLGCGGMSVLAKWA) threads the bilayer.

Belongs to the ZIP transporter (TC 2.A.5) family.

Its subcellular location is the cell membrane. Its function is as follows. Probably mediates zinc uptake from the rhizosphere. In Arabidopsis thaliana (Mouse-ear cress), this protein is Probable zinc transporter 8 (ZIP8).